Reading from the N-terminus, the 240-residue chain is UDP-2,3-diacylglucosamine hydrolase (240 aa).

5 residues coordinate Mn(2+): aspartate 8, histidine 10, aspartate 41, asparagine 79, and histidine 114. 79-80 (NR) is a substrate binding site. Aspartate 122, serine 160, threonine 164, lysine 167, and histidine 195 together coordinate substrate. The Mn(2+) site is built by histidine 195 and histidine 197.

It belongs to the LpxH family. The cofactor is Mn(2+).

It is found in the cell inner membrane. It carries out the reaction UDP-2-N,3-O-bis[(3R)-3-hydroxytetradecanoyl]-alpha-D-glucosamine + H2O = 2-N,3-O-bis[(3R)-3-hydroxytetradecanoyl]-alpha-D-glucosaminyl 1-phosphate + UMP + 2 H(+). It participates in glycolipid biosynthesis; lipid IV(A) biosynthesis; lipid IV(A) from (3R)-3-hydroxytetradecanoyl-[acyl-carrier-protein] and UDP-N-acetyl-alpha-D-glucosamine: step 4/6. Its function is as follows. Hydrolyzes the pyrophosphate bond of UDP-2,3-diacylglucosamine to yield 2,3-diacylglucosamine 1-phosphate (lipid X) and UMP by catalyzing the attack of water at the alpha-P atom. Involved in the biosynthesis of lipid A, a phosphorylated glycolipid that anchors the lipopolysaccharide to the outer membrane of the cell. The protein is UDP-2,3-diacylglucosamine hydrolase of Pseudomonas aeruginosa (strain UCBPP-PA14).